Reading from the N-terminus, the 146-residue chain is Snaclec 5 (146 aa).

The signal sequence occupies residues 1–23 (MGRFIFISFGLLVVFLSLSGTEA). Disulfide bonds link C25/C36, C53/C142, and C119/C134. One can recognise a C-type lectin domain in the interval 32 to 143 (YEGHCYRVFD…CRNYGHFVCK (112 aa)).

Belongs to the snaclec family. As to quaternary structure, heterodimer; disulfide-linked. Expressed by the venom gland.

It is found in the secreted. Functionally, interferes with one step of hemostasis (modulation of platelet aggregation, or coagulation cascade, for example). This Echis pyramidum leakeyi (Leakey's carpet viper) protein is Snaclec 5.